A 190-amino-acid polypeptide reads, in one-letter code: uncharacterized protein (190 aa).

This is an uncharacterized protein from Aquifex aeolicus (strain VF5).